A 66-amino-acid chain; its full sequence is Sarcoplasmic/endoplasmic reticulum calcium ATPase regulator ARLN (66 aa).

N-acetylmethionine is present on Met-1. The disordered stretch occupies residues 1-37 (MEVDAPGVDGRDGLRERRGFSEGGRQNFDVRPQSGAN). The span at 9–20 (DGRDGLRERRGF) shows a compositional bias: basic and acidic residues. Residues 45-65 (WLDLWLFILFDVVVFLFVYFL) form a helical membrane-spanning segment.

As to quaternary structure, homooligomer. Can also form heterooligomers with other sarcoplasmic/endoplasmic reticulum calcium ATPase (SERCA) regulators ERLN, PLN, SLN and STRIT1/DWORF. Monomer. Interacts as a monomer with ATP2A2/SERCA2; the interaction results in inhibition of ATP2A2 Ca(2+) affinity.

It is found in the endoplasmic reticulum membrane. Functionally, inhibits the activity of the calcium ATPases ATP2A2/SERCA2 and ATP2A3/SERCA3 by decreasing their apparent affinity for Ca(2+). This chain is Sarcoplasmic/endoplasmic reticulum calcium ATPase regulator ARLN, found in Homo sapiens (Human).